A 308-amino-acid chain; its full sequence is Glutaminase (308 aa).

7 residues coordinate substrate: S66, N117, E162, N169, Y193, Y244, and V262.

Belongs to the glutaminase family. Homotetramer.

The catalysed reaction is L-glutamine + H2O = L-glutamate + NH4(+). The protein is Glutaminase of Natranaerobius thermophilus (strain ATCC BAA-1301 / DSM 18059 / JW/NM-WN-LF).